A 230-amino-acid polypeptide reads, in one-letter code: Uracil-DNA glycosylase (230 aa).

Catalysis depends on Asp-65, which acts as the Proton acceptor.

This sequence belongs to the uracil-DNA glycosylase (UDG) superfamily. UNG family.

It localises to the cytoplasm. It carries out the reaction Hydrolyzes single-stranded DNA or mismatched double-stranded DNA and polynucleotides, releasing free uracil.. Excises uracil residues from the DNA which can arise as a result of misincorporation of dUMP residues by DNA polymerase or due to deamination of cytosine. The protein is Uracil-DNA glycosylase of Pediococcus pentosaceus (strain ATCC 25745 / CCUG 21536 / LMG 10740 / 183-1w).